The following is a 407-amino-acid chain: Leucine-rich repeat-containing protein 42 (407 aa).

5 LRR repeats span residues 138–159, 163–184, 191–211, 223–243, and 247–268; these read VLKSLCLRNRYLLISERLEEIR, SLECLDLYGCRLGDNHELFKYI, SLVKLFMGANCLSDAGLQRLT, NLQLLDLSENHITEKGLRYLT, and TLQKLDLSGTKVMMDVSLKGFF. The segment at 360 to 389 is disordered; that stretch reads VQSSPSGETHSTHKSRKRRLSTEEEQSAAP.

The protein belongs to the LRRC42 family.

The chain is Leucine-rich repeat-containing protein 42 (lrrc42) from Danio rerio (Zebrafish).